Here is a 251-residue protein sequence, read N- to C-terminus: HTH-type transcriptional regulator UlaR (251 aa).

The HTH deoR-type domain occupies 3–58 (EAQRHQILLEMLAQLGFVTVEKVVERLGISPATARRDINKLGESGKLKKVRNGAEA). The segment at residues 20–39 (VTVEKVVERLGISPATARRD) is a DNA-binding region (H-T-H motif).

It localises to the cytoplasm. In terms of biological role, represses ulaG and the ulaABCDEF operon. The sequence is that of HTH-type transcriptional regulator UlaR from Shigella flexneri.